The chain runs to 442 residues: G-protein coupled receptor family C group 5 member C (442 aa).

A signal peptide spans 1–23 (MAIHRTVLMCLGLPLFLLPGARA). Over 24 to 50 (QEQAPPGCSPDLNPLYYNLCDRSEAWG) the chain is Extracellular. The helical transmembrane segment at 51-71 (IILEAVAGAGVVTTFVLTIIL) threads the bilayer. The Cytoplasmic segment spans residues 72-85 (VASLPFVQDTKKRS). Residues 86–106 (LLGTQVFFLLGTLGLFCLVFA) form a helical membrane-spanning segment. Topologically, residues 107–120 (CVVKPSFSTCASRR) are extracellular. Residues 121 to 141 (FLFGVLFAICFSCLVAHVLAL) traverse the membrane as a helical segment. The Cytoplasmic segment spans residues 142–155 (HFLVRKNHGPRGWV). A helical membrane pass occupies residues 156–176 (IFLVALLLSLVEVIINTEWLI). Residues 177-209 (ITLVRGAGTEGDALGNGSAGWVAVSPCAIANAD) are Extracellular-facing. Asn192 is a glycosylation site (N-linked (GlcNAc...) asparagine). The helical transmembrane segment at 210-230 (FVMALIYVMLLLLCAFSGAWS) threads the bilayer. Topologically, residues 231-242 (ALCGRFKRWRKH) are cytoplasmic. Residues 243-263 (GVFILLTTTASIAVWVVWIVM) form a helical membrane-spanning segment. The Extracellular segment spans residues 264–280 (YTYGNRQHNSPTWDDPT). A helical transmembrane segment spans residues 281 to 301 (LAIALATNAWAFVLFYVIPEV). Over 302-442 (SQVTRSSPEQ…QVFRNPYVWD (141 aa)) the chain is Cytoplasmic. Ser345, Ser384, Ser404, and Ser407 each carry phosphoserine. Tyr415 is subject to Phosphotyrosine. Thr424 is modified (phosphothreonine).

It belongs to the G-protein coupled receptor 3 family.

It localises to the cell membrane. Functionally, this retinoic acid-inducible G-protein coupled receptor provide evidence for a possible interaction between retinoid and G-protein signaling pathways. The polypeptide is G-protein coupled receptor family C group 5 member C (GPRC5C) (Bos taurus (Bovine)).